The sequence spans 434 residues: Putative ankyrin repeat protein FPV219 (434 aa).

7 ANK repeats span residues 33-62 (DDLSPLHHAVSRGYKEIVISMLEHGADVNL), 66-95 (EVCSPLHIAIKNDNVEMVQLLIDNGADTDC), 101-131 (HGTPLQCAILNENYRITDALLESGADTHEIY), 132-161 (TKNHPIIEAIKLDNLPLVRLLLRHGADVNT), 165-195 (LYGYPIHLAIRYGNIDIIKELLYHGVIESYS), 196-225 (LYPSLLHQSIMCNNKEVVLLLISMGFDVNA), and 229-258 (EGNTPMHLAVQKNLVGIVKILLDKGADTSI).

The protein is Putative ankyrin repeat protein FPV219 of Fowlpox virus (strain NVSL) (FPV).